The following is a 344-amino-acid chain: Holliday junction branch migration complex subunit RuvB (344 aa).

Positions 1–25 (MTDSDPTLRPDRLPEDVQATDDRAL) are enriched in basic and acidic residues. The interval 1–33 (MTDSDPTLRPDRLPEDVQATDDRALRPQSLDDF) is disordered. Positions 1–186 (MTDSDPTLRP…FGIPTRLNFY (186 aa)) are large ATPase domain (RuvB-L). Residues leucine 25, arginine 26, glycine 67, lysine 70, threonine 71, threonine 72, 133 to 135 (EDF), arginine 176, tyrosine 186, and arginine 223 each bind ATP. Threonine 71 is a binding site for Mg(2+). Residues 187–257 (TIAELDQIVA…IADSALTRLG (71 aa)) are small ATPAse domain (RuvB-S). The head domain (RuvB-H) stretch occupies residues 260–344 (DLGLDGADRR…PKRPDQGELI (85 aa)). Arginine 296, arginine 315, and arginine 320 together coordinate DNA.

This sequence belongs to the RuvB family. As to quaternary structure, homohexamer. Forms an RuvA(8)-RuvB(12)-Holliday junction (HJ) complex. HJ DNA is sandwiched between 2 RuvA tetramers; dsDNA enters through RuvA and exits via RuvB. An RuvB hexamer assembles on each DNA strand where it exits the tetramer. Each RuvB hexamer is contacted by two RuvA subunits (via domain III) on 2 adjacent RuvB subunits; this complex drives branch migration. In the full resolvosome a probable DNA-RuvA(4)-RuvB(12)-RuvC(2) complex forms which resolves the HJ.

The protein resides in the cytoplasm. It catalyses the reaction ATP + H2O = ADP + phosphate + H(+). Functionally, the RuvA-RuvB-RuvC complex processes Holliday junction (HJ) DNA during genetic recombination and DNA repair, while the RuvA-RuvB complex plays an important role in the rescue of blocked DNA replication forks via replication fork reversal (RFR). RuvA specifically binds to HJ cruciform DNA, conferring on it an open structure. The RuvB hexamer acts as an ATP-dependent pump, pulling dsDNA into and through the RuvAB complex. RuvB forms 2 homohexamers on either side of HJ DNA bound by 1 or 2 RuvA tetramers; 4 subunits per hexamer contact DNA at a time. Coordinated motions by a converter formed by DNA-disengaged RuvB subunits stimulates ATP hydrolysis and nucleotide exchange. Immobilization of the converter enables RuvB to convert the ATP-contained energy into a lever motion, pulling 2 nucleotides of DNA out of the RuvA tetramer per ATP hydrolyzed, thus driving DNA branch migration. The RuvB motors rotate together with the DNA substrate, which together with the progressing nucleotide cycle form the mechanistic basis for DNA recombination by continuous HJ branch migration. Branch migration allows RuvC to scan DNA until it finds its consensus sequence, where it cleaves and resolves cruciform DNA. This is Holliday junction branch migration complex subunit RuvB from Jannaschia sp. (strain CCS1).